The following is a 379-amino-acid chain: MADKRDYYEVLGVDKNASDAELKKAYRNLAKKYHPDVNPGDTTAEAKFKEVNEAYEILSDSQKRSRYDQFGHAGTDPNGFGGAGGFSTDFDFGGIGDIFETFFGGSGFGGRSKTRRGPQKGADIKYSTEISFEEAAFGVEREINVSKMEVCSKCTGSGAKPGSNVTTCNHCNGTGQVQIKQNTPFGQFINTKTCDACKGEGKIITEPCPACNGKGRLRSTKKIKIDIPAGIDDGQTISLRGGGDPGVKGGPNGDLYVNIRVKPHPLFTRQGNNVVCEVPITFTQAALGAELEVPTLDGKVKYTVPEGTQTGSVFRLKGKGIPYLRGNGRGDQYVKVNIEVPKKLNDKQKALLREFAEISGDDSHEQRKGFFDKMKDAFK.

The region spanning aspartate 6 to glycine 71 is the J domain. A CR-type zinc finger spans residues glycine 138–threonine 220. Zn(2+)-binding residues include cysteine 151, cysteine 154, cysteine 168, cysteine 171, cysteine 194, cysteine 197, cysteine 208, and cysteine 211. CXXCXGXG motif repeat units lie at residues cysteine 151–glycine 158, cysteine 168–glycine 175, cysteine 194–glycine 201, and cysteine 208–glycine 215.

The protein belongs to the DnaJ family. In terms of assembly, homodimer. Requires Zn(2+) as cofactor.

Its subcellular location is the cytoplasm. In terms of biological role, participates actively in the response to hyperosmotic and heat shock by preventing the aggregation of stress-denatured proteins and by disaggregating proteins, also in an autonomous, DnaK-independent fashion. Unfolded proteins bind initially to DnaJ; upon interaction with the DnaJ-bound protein, DnaK hydrolyzes its bound ATP, resulting in the formation of a stable complex. GrpE releases ADP from DnaK; ATP binding to DnaK triggers the release of the substrate protein, thus completing the reaction cycle. Several rounds of ATP-dependent interactions between DnaJ, DnaK and GrpE are required for fully efficient folding. Also involved, together with DnaK and GrpE, in the DNA replication of plasmids through activation of initiation proteins. In Ruminiclostridium cellulolyticum (strain ATCC 35319 / DSM 5812 / JCM 6584 / H10) (Clostridium cellulolyticum), this protein is Chaperone protein DnaJ.